A 663-amino-acid chain; its full sequence is Rho GTPase-activating protein 18 (663 aa).

The segment at 15–37 is disordered; sequence YHPSGKDQTVGNSHAKAGEEATS. Residues S66 and S69 each carry the phosphoserine modification. At T158 the chain carries Phosphothreonine. 2 disordered regions span residues 179-227 and 243-277; these read RESK…PAPE and QKESSKEKIQKSKGDDATLPSFRLPKDKTGTTRIG. Basic and acidic residues-rich tracts occupy residues 197–219 and 245–258; these read NENKYQGRDDEASNLVGEEKLIP and ESSKEKIQKSKGDD. Phosphoserine is present on S263. One can recognise a Rho-GAP domain in the interval 324 to 523; the sequence is VPLTALLEQD…LLIKYQKLLW (200 aa). S610 carries the phosphoserine modification.

As to quaternary structure, interacts with MPHOSPH6.

It is found in the cytoplasm. Its function is as follows. Rho GTPase activating protein that suppresses F-actin polymerization by inhibiting Rho. Rho GTPase activating proteins act by converting Rho-type GTPases to an inactive GDP-bound state. Plays a key role in tissue tension and 3D tissue shape by regulating cortical actomyosin network formation. Acts downstream of YAP1 and inhibits actin polymerization, which in turn reduces nuclear localization of YAP1. Regulates cell shape, spreading, and migration. This is Rho GTPase-activating protein 18 from Homo sapiens (Human).